We begin with the raw amino-acid sequence, 156 residues long: Small ribosomal subunit protein uS7 (156 aa).

Belongs to the universal ribosomal protein uS7 family. Part of the 30S ribosomal subunit. Contacts proteins S9 and S11.

Its function is as follows. One of the primary rRNA binding proteins, it binds directly to 16S rRNA where it nucleates assembly of the head domain of the 30S subunit. Is located at the subunit interface close to the decoding center, probably blocks exit of the E-site tRNA. The protein is Small ribosomal subunit protein uS7 of Methylorubrum populi (strain ATCC BAA-705 / NCIMB 13946 / BJ001) (Methylobacterium populi).